The chain runs to 784 residues: E3 UFM1-protein ligase 1 homolog (784 aa).

A compositionally biased stretch (basic and acidic residues) spans 398–414; sequence QEVDHGVMEEEKADKRE. A disordered region spans residues 398 to 472; the sequence is QEVDHGVMEE…ASNKKGGKDP (75 aa).

The protein belongs to the UFL1 family.

E3 UFM1-protein ligase that mediates ufmylation of target proteins. This Anopheles gambiae (African malaria mosquito) protein is E3 UFM1-protein ligase 1 homolog.